The primary structure comprises 176 residues: Translation initiation factor IF-3 (176 aa).

It belongs to the IF-3 family. In terms of assembly, monomer.

The protein resides in the cytoplasm. In terms of biological role, IF-3 binds to the 30S ribosomal subunit and shifts the equilibrium between 70S ribosomes and their 50S and 30S subunits in favor of the free subunits, thus enhancing the availability of 30S subunits on which protein synthesis initiation begins. The sequence is that of Translation initiation factor IF-3 from Nitratidesulfovibrio vulgaris (strain ATCC 29579 / DSM 644 / CCUG 34227 / NCIMB 8303 / VKM B-1760 / Hildenborough) (Desulfovibrio vulgaris).